Consider the following 456-residue polypeptide: tRNA(Ile)-lysidine synthase (456 aa).

Position 27 to 32 (27 to 32 (SGGVDS)) interacts with ATP.

It belongs to the tRNA(Ile)-lysidine synthase family.

It localises to the cytoplasm. The enzyme catalyses cytidine(34) in tRNA(Ile2) + L-lysine + ATP = lysidine(34) in tRNA(Ile2) + AMP + diphosphate + H(+). In terms of biological role, ligates lysine onto the cytidine present at position 34 of the AUA codon-specific tRNA(Ile) that contains the anticodon CAU, in an ATP-dependent manner. Cytidine is converted to lysidine, thus changing the amino acid specificity of the tRNA from methionine to isoleucine. In Vibrio atlanticus (strain LGP32) (Vibrio splendidus (strain Mel32)), this protein is tRNA(Ile)-lysidine synthase.